The chain runs to 1570 residues: Mediator of RNA polymerase II transcription subunit 1 (1570 aa).

2 short sequence motifs (LXXLL motif) span residues 585 to 589 (LTSLL) and 626 to 630 (LMNLL). Disordered regions lie at residues 592-687 (TNNT…TEDD), 771-880 (SKLS…FKDF), and 922-1561 (SKTL…MDDD). Residues 675–687 (TGAEKMKNQTEDD) show a composition bias toward basic and acidic residues. 3 stretches are compositionally biased toward polar residues: residues 788–801 (RDSS…STLF), 832–861 (GSPN…QSGF), and 931–942 (QETQSRSQSPLL). Positions 946–958 (LGKDRPQKQKVKE) are enriched in basic and acidic residues. Positions 961 to 970 (NGGGAGGGLS) are enriched in gly residues. Low complexity-rich tracts occupy residues 1022 to 1035 (PTST…GTSG), 1066 to 1082 (SSHG…SSSS), 1089 to 1113 (SSLS…MKIG), 1121 to 1140 (SGQS…SMGK), and 1152 to 1161 (SSNVSNSSGS). The segment covering 1173–1190 (MNPSLSKPNISPSHSRPS) has biased composition (polar residues). Residues 1217–1228 (GSGGQHLSGGGS) are compositionally biased toward gly residues. A compositionally biased stretch (low complexity) spans 1229–1271 (NSTTKSSSGLVSSGSLSQKPNSSSSSSSSSSSSSSSSSSSSSS). Residues 1276 to 1287 (VSQNLHGNSKGK) show a composition bias toward polar residues. The segment covering 1308–1328 (VGTGGPGSEDPMDGGGGGGST) has biased composition (gly residues). Positions 1347 to 1359 (PTKREKSEKDKSK) are enriched in basic and acidic residues. 2 stretches are compositionally biased toward polar residues: residues 1418–1433 (SQMQ…SGST) and 1441–1455 (PSHN…QALD). The span at 1459 to 1469 (ESGSSSIAEKS) shows a compositional bias: low complexity. Residues 1494 to 1503 (KHKKHKKEKK) show a composition bias toward basic residues. Basic and acidic residues predominate over residues 1504-1516 (RLKDKDRDREKKK). Positions 1536–1546 (MAMSGGSMMSS) are enriched in low complexity.

This sequence belongs to the Mediator complex subunit 1 family. In terms of assembly, component of the Mediator complex.

The protein resides in the nucleus. Functionally, component of the Mediator complex, a coactivator involved in the regulated transcription of nearly all RNA polymerase II-dependent genes. Mediator functions as a bridge to convey information from gene-specific regulatory proteins to the basal RNA polymerase II transcription machinery. Mediator is recruited to promoters by direct interactions with regulatory proteins and serves as a scaffold for the assembly of a functional preinitiation complex with RNA polymerase II and the general transcription factors. The sequence is that of Mediator of RNA polymerase II transcription subunit 1 (med1) from Xenopus laevis (African clawed frog).